Here is a 166-residue protein sequence, read N- to C-terminus: Peptide methionine sulfoxide reductase MsrA (166 aa).

The active site involves Cys-11.

This sequence belongs to the MsrA Met sulfoxide reductase family.

The enzyme catalyses L-methionyl-[protein] + [thioredoxin]-disulfide + H2O = L-methionyl-(S)-S-oxide-[protein] + [thioredoxin]-dithiol. It catalyses the reaction [thioredoxin]-disulfide + L-methionine + H2O = L-methionine (S)-S-oxide + [thioredoxin]-dithiol. In terms of biological role, has an important function as a repair enzyme for proteins that have been inactivated by oxidation. Catalyzes the reversible oxidation-reduction of methionine sulfoxide in proteins to methionine. This chain is Peptide methionine sulfoxide reductase MsrA, found in Mycoplasmopsis pulmonis (strain UAB CTIP) (Mycoplasma pulmonis).